Consider the following 963-residue polypeptide: Adhesion G protein-coupled receptor D2 (963 aa).

Over 1–662 the chain is Extracellular; that stretch reads MDAPWGAGER…EEESLLRTLS (662 aa). The interval 18–38 is disordered; that stretch reads DRSGVSLGPPPTPQVNQGTLG. In terms of domain architecture, Pentraxin (PTX) spans 116 to 325; sequence TTAVLVFDER…LPTVWVRLLC (210 aa). Residues Cys-146 and Cys-212 are joined by a disulfide bond. A glycan (N-linked (GlcNAc...) asparagine) is linked at Asn-271. Residues 489-649 enclose the GAIN-B domain; sequence MALVASVQRL…AILLQIYEVQ (161 aa). Residues 599-649 are GPS; the sequence is PLFPPHPPSPYTGGAWATTGCSVAALYLDSTACFCNHSTSFAILLQIYEVQ. The cysteines at positions 619 and 633 are disulfide-linked. An N-linked (GlcNAc...) asparagine glycan is attached at Asn-634. The chain crosses the membrane as a helical span at residues 663–683; sequence FVGCGVSFCALTTTFLLFLVA. Topologically, residues 684-691 are cytoplasmic; that stretch reads GVPKSERT. The chain crosses the membrane as a helical span at residues 692-712; it reads TVHKNLTFSLASAEGFLMTSE. Residues 713 to 720 lie on the Extracellular side of the membrane; that stretch reads WAKANEVA. A helical membrane pass occupies residues 721 to 741; that stretch reads CVAVTVAMHFLFLVAFSWMLV. Residues 742–762 are Cytoplasmic-facing; it reads EGLLLWRKVVAVSMHPGPGMR. A helical transmembrane segment spans residues 763–783; that stretch reads LYHATGWGVPVGIVAVTLAML. The Extracellular portion of the chain corresponds to 784–800; the sequence is PHDYVAPGHCWLNVHTN. Residues 801 to 821 form a helical membrane-spanning segment; it reads AIWAFVGPVLFVLTANTCILA. Residues 822 to 857 lie on the Cytoplasmic side of the membrane; sequence RVVMITVSSARRRARMLSPQPCLQQQIWTQIWATVK. A helical membrane pass occupies residues 858 to 878; the sequence is PVLVLLPVLGLTWLAGILVHL. Over 879-880 the chain is Extracellular; sequence SP. A helical membrane pass occupies residues 881-901; it reads AWAYAAVGLNSIQGLYIFLVY. The Cytoplasmic segment spans residues 902–963; that stretch reads AACNEEVRSA…TPRHPLKAPA (62 aa).

It belongs to the G-protein coupled receptor 2 family. Adhesion G-protein coupled receptor (ADGR) subfamily.

Its subcellular location is the membrane. Functionally, orphan receptor. The protein is Adhesion G protein-coupled receptor D2 (ADGRD2) of Homo sapiens (Human).